We begin with the raw amino-acid sequence, 221 residues long: Enolase-phosphatase E1 (221 aa).

The Mg(2+) site is built by D9 and E11. Substrate-binding positions include 116–117 and K152; that span reads SS. D180 is a binding site for Mg(2+).

This sequence belongs to the HAD-like hydrolase superfamily. MasA/MtnC family. In terms of assembly, monomer. Requires Mg(2+) as cofactor.

The protein localises to the cytoplasm. Its subcellular location is the nucleus. It catalyses the reaction 5-methylsulfanyl-2,3-dioxopentyl phosphate + H2O = 1,2-dihydroxy-5-(methylsulfanyl)pent-1-en-3-one + phosphate. It functions in the pathway amino-acid biosynthesis; L-methionine biosynthesis via salvage pathway; L-methionine from S-methyl-5-thio-alpha-D-ribose 1-phosphate: step 3/6. Its pathway is amino-acid biosynthesis; L-methionine biosynthesis via salvage pathway; L-methionine from S-methyl-5-thio-alpha-D-ribose 1-phosphate: step 4/6. Its function is as follows. Bifunctional enzyme that catalyzes the enolization of 2,3-diketo-5-methylthiopentyl-1-phosphate (DK-MTP-1-P) into the intermediate 2-hydroxy-3-keto-5-methylthiopentenyl-1-phosphate (HK-MTPenyl-1-P), which is then dephosphorylated to form the acireductone 1,2-dihydroxy-3-keto-5-methylthiopentene (DHK-MTPene). The chain is Enolase-phosphatase E1 from Kluyveromyces lactis (strain ATCC 8585 / CBS 2359 / DSM 70799 / NBRC 1267 / NRRL Y-1140 / WM37) (Yeast).